The chain runs to 380 residues: N-acetylaspartylglutamate synthase A (380 aa).

Residues 115–300 form the ATP-grasp domain; that stretch reads FQELAGHGVP…VGAIIADYAM (186 aa). ATP contacts are provided by residues lysine 154, 189 to 199, and arginine 215; that span reads QKYVKESHGKD. Residues aspartate 260, glutamate 273, and asparagine 275 each coordinate Mg(2+). Mn(2+) is bound by residues aspartate 260, glutamate 273, and asparagine 275. At serine 319 the chain carries Phosphoserine. The disordered stretch occupies residues 345 to 370; that stretch reads GSTSSESEPELGEARDSSVKTMGAPP.

The protein belongs to the RimK family. Mg(2+) is required as a cofactor. It depends on Mn(2+) as a cofactor. Highly expressed in spinal cord and brain.

It is found in the cytoplasm. It catalyses the reaction N-acetyl-L-aspartate + L-glutamate + ATP = N-acetyl-L-aspartyl-L-glutamate + ADP + phosphate + H(+). The enzyme catalyses N-acetyl-L-aspartate + 2 L-glutamate + 2 ATP = N-acetyl-L-aspartyl-L-glutamyl-L-glutamate + 2 ADP + 2 phosphate + 2 H(+). In terms of biological role, catalyzes the synthesis of N-acetyl-L-aspartyl-L-glutamate (NAAG) and N-acetyl-L-aspartyl-L-glutamyl-L-glutamate. The polypeptide is N-acetylaspartylglutamate synthase A (Rimkla) (Mus musculus (Mouse)).